A 281-amino-acid chain; its full sequence is CDAN1-interacting nuclease 1 (281 aa).

It localises to the nucleus. The protein resides in the cytoplasm. In terms of biological role, plays a role in erythroid cell differentiation. The chain is CDAN1-interacting nuclease 1 (CDIN1) from Bos taurus (Bovine).